A 768-amino-acid chain; its full sequence is MLDINEMENKWKDYWFNNDVFKFRPGNKIFIIDTPPPTVSGKMHMGHAYSYPHQDFMARYMRMKGFSVYYPWGFDDNGLPTERYVEKERHVTIRNTPLDEYIKICREASRDAEKILLKNWYDLGLSCDFKNYIETSSDFSTRISQELFIDLVLNNRAYRAEAPVIRCPTCNTAISQIDMKDTEIDTDLVYINFSGIEIATTRPELLGACVALVVNPNDPRYKKIINSEVVVPLYNYTVRIISDDSIDMNFGTGAEMLCTFGDQHDLELWRKYNPGTRIIIKNDLIDDGIIIKGLSVKEARKEIIKKLKENNYLIKTERIKHSVNTHERCGTPVEIIISKQWYIKDLDIKDELLDLGNRIEWIPDYMKTRYQNWVSGLKWDWCISRQRYYGIPFPVWYCKDCGGIVLADKSELPVDPRLSGTNKRCSCGSGNLEPETDVMDTWATSSISVTLYLMHINSMNLYPADVRFQGHDIITSWAFTTILRSYLHYRDVPWKKIFISGNVYDPYGEKMSKSKGNIIEPSTIIEKYGADALRFWASTTMPGENIKIREQDLVRGRKTVIKLYNSARLVLMLSDNIKGSMDNIISQVNRWILTKFEKTLKNVTELMDGYYFSRARSELDNFFWNIFCDNYLEIIKSEIKRYPEETAAVSRFLMENIIKMYSPIMPFITEELYHEFNKDSLSVSLEKYPEYNEDYIFDGAEDFDYIIDIINKIRAIKSNMKMSMAAPISISLKGNEKIINDSAEIIKSVMHVENLKISNSDNIEIEVQ.

The 'HIGH' region signature appears at P37 to H47. The 'KMSKS' region signature appears at K510–S514. K513 serves as a coordination point for ATP.

Belongs to the class-I aminoacyl-tRNA synthetase family. ValS type 2 subfamily.

The protein resides in the cytoplasm. It catalyses the reaction tRNA(Val) + L-valine + ATP = L-valyl-tRNA(Val) + AMP + diphosphate. Functionally, catalyzes the attachment of valine to tRNA(Val). As ValRS can inadvertently accommodate and process structurally similar amino acids such as threonine, to avoid such errors, it has a 'posttransfer' editing activity that hydrolyzes mischarged Thr-tRNA(Val) in a tRNA-dependent manner. This is Valine--tRNA ligase from Picrophilus torridus (strain ATCC 700027 / DSM 9790 / JCM 10055 / NBRC 100828 / KAW 2/3).